Consider the following 387-residue polypeptide: Probable nitrate transporter NarT (387 aa).

12 helical membrane-spanning segments follow: residues 14–34 (TLSLVAGFMAWSIISPLMPFI), 45–65 (ISVILAIPVILGSVLRVPFGY), 69–89 (IVGAKWVFFWSFIVLLLPIFL), 97–117 (GMLMLSGFFLGIGGAIFSVGV), 137–157 (GVGNIGTAVSSFCAPVLAGAI), 161–181 (NTVRSYLIILSIFAILMFFLG), 211–231 (WYFITFGAFVAFGIFLPNFLV), 246–266 (GIFIALATFLRPVGGVIGDKF), 268–288 (AVQALIIDFVIMIIGALILSL), 294–314 (LFTIGCLAISICAGIGNGLIF), 330–350 (GIVSMMGGLGGFFPPLVITFV), and 358–378 (HLAFFFLAIFGVIALITMIHL).

It belongs to the major facilitator superfamily. Nitrate/nitrite porter (TC 2.A.1.8) family.

It is found in the cell membrane. In terms of biological role, probably required for nitrate uptake under anoxic conditions. Also possibly involved in excretion of nitrite produced by the dissimilatory reduction of nitrate. This is Probable nitrate transporter NarT (narT) from Staphylococcus epidermidis (strain ATCC 35984 / DSM 28319 / BCRC 17069 / CCUG 31568 / BM 3577 / RP62A).